Reading from the N-terminus, the 117-residue chain is Inner kinetochore subunit MHF1 (117 aa).

It belongs to the TAF9 family. CENP-S/MHF1 subfamily. In terms of assembly, the MHF histone-fold complex is a heterotetramer of 2 MHF1-MHF2 heterodimers. Together with MPH1/FANCM, forms the FANCM-MHF complex. Component of the inner kinetochore constitutive centromere-associated network (CCAN).

In terms of biological role, dsDNA-binding component of a FANCM-MHF complex involved in DNA damage repair and genome maintenance. FANCM-MHF promotes gene conversion at blocked replication forks, probably by reversal of the stalled fork. Component of the kinetochore, a multiprotein complex that assembles on centromeric DNA and attaches chromosomes to spindle microtubules, mediating chromosome segregation and sister chromatid segregation during meiosis and mitosis. Component of the inner kinetochore constitutive centromere-associated network (CCAN), which serves as a structural platform for outer kinetochore assembly. This is Inner kinetochore subunit MHF1 from Candida albicans (strain SC5314 / ATCC MYA-2876) (Yeast).